We begin with the raw amino-acid sequence, 131 residues long: Small ribosomal subunit protein uS8 (131 aa).

It belongs to the universal ribosomal protein uS8 family. Part of the 30S ribosomal subunit. Contacts proteins S5 and S12.

Its function is as follows. One of the primary rRNA binding proteins, it binds directly to 16S rRNA central domain where it helps coordinate assembly of the platform of the 30S subunit. The polypeptide is Small ribosomal subunit protein uS8 (Acidovorax sp. (strain JS42)).